A 26-amino-acid chain; its full sequence is Peroxidase 1 (26 aa).

D15 is a Ca(2+) binding site.

It belongs to the peroxidase family. Classical plant (class III) peroxidase subfamily. It depends on heme b as a cofactor. The cofactor is Ca(2+).

It localises to the secreted. It carries out the reaction 2 a phenolic donor + H2O2 = 2 a phenolic radical donor + 2 H2O. Its function is as follows. Removal of H(2)O(2), oxidation of toxic reductants, biosynthesis and degradation of lignin, suberization, auxin catabolism, response to environmental stresses such as wounding, pathogen attack and oxidative stress. These functions might be dependent on each isozyme/isoform in each plant tissue. This is Peroxidase 1 from Vitis vinifera (Grape).